Reading from the N-terminus, the 189-residue chain is Elongation factor P (189 aa).

K34 carries the post-translational modification N6-(3,6-diaminohexanoyl)-5-hydroxylysine.

The protein belongs to the elongation factor P family. In terms of processing, may be beta-lysylated on the epsilon-amino group of Lys-34 by the combined action of EpmA and EpmB, and then hydroxylated on the C5 position of the same residue by EpmC (if this protein is present). Lysylation is critical for the stimulatory effect of EF-P on peptide-bond formation. The lysylation moiety may extend toward the peptidyltransferase center and stabilize the terminal 3-CCA end of the tRNA. Hydroxylation of the C5 position on Lys-34 may allow additional potential stabilizing hydrogen-bond interactions with the P-tRNA.

The protein localises to the cytoplasm. Its pathway is protein biosynthesis; polypeptide chain elongation. Functionally, involved in peptide bond synthesis. Alleviates ribosome stalling that occurs when 3 or more consecutive Pro residues or the sequence PPG is present in a protein, possibly by augmenting the peptidyl transferase activity of the ribosome. Modification of Lys-34 is required for alleviation. The protein is Elongation factor P of Idiomarina loihiensis (strain ATCC BAA-735 / DSM 15497 / L2-TR).